Consider the following 636-residue polypeptide: Probable potassium transport system protein Kup (636 aa).

12 consecutive transmembrane segments (helical) span residues 22-42, 64-84, 115-135, 150-170, 182-202, 220-240, 261-281, 293-313, 351-371, 383-403, 408-428, and 433-453; these read LGLLVAAVGVVYGDIGTSPLY, ILSLILWSLLWVVSFKYVMFI, LMVICGLIGASLFYGDSMITP, FDGIDHWVVPISLVVLVALFL, LFGPIMVTWFVVLGALGVHGI, FFVVHPGMGVAILGAVVLALT, WFILVLPALVLNYFGQGALLL, LLAPSWALLPLVGLATMATVI, IYIGAVNWTLMVGVVLLVIGF, VAVTGTMLMTTILVSAVMLLL, PVLAVPLLMGFLFVDGLFFAA, and IVQGGAFPVLAGGVLFLLMST.

This sequence belongs to the HAK/KUP transporter (TC 2.A.72) family.

It is found in the cell inner membrane. The catalysed reaction is K(+)(in) + H(+)(in) = K(+)(out) + H(+)(out). In terms of biological role, transport of potassium into the cell. Likely operates as a K(+):H(+) symporter. In Pseudomonas putida (strain GB-1), this protein is Probable potassium transport system protein Kup.